The primary structure comprises 636 residues: 1-deoxy-D-xylulose-5-phosphate synthase (636 aa).

Thiamine diphosphate-binding positions include His73 and 114-116 (SHA). A Mg(2+)-binding site is contributed by Asp146. Residues 147 to 148 (GA), Asn176, Tyr287, and Glu368 each bind thiamine diphosphate. Asn176 is a Mg(2+) binding site.

Belongs to the transketolase family. DXPS subfamily. Homodimer. The cofactor is Mg(2+). Requires thiamine diphosphate as cofactor.

The enzyme catalyses D-glyceraldehyde 3-phosphate + pyruvate + H(+) = 1-deoxy-D-xylulose 5-phosphate + CO2. Its pathway is metabolic intermediate biosynthesis; 1-deoxy-D-xylulose 5-phosphate biosynthesis; 1-deoxy-D-xylulose 5-phosphate from D-glyceraldehyde 3-phosphate and pyruvate: step 1/1. Catalyzes the acyloin condensation reaction between C atoms 2 and 3 of pyruvate and glyceraldehyde 3-phosphate to yield 1-deoxy-D-xylulose-5-phosphate (DXP). The polypeptide is 1-deoxy-D-xylulose-5-phosphate synthase (Corynebacterium glutamicum (strain ATCC 13032 / DSM 20300 / JCM 1318 / BCRC 11384 / CCUG 27702 / LMG 3730 / NBRC 12168 / NCIMB 10025 / NRRL B-2784 / 534)).